Consider the following 513-residue polypeptide: uncharacterized protein (513 aa).

Belongs to the NodU/CmcH family.

This is an uncharacterized protein from Methanocaldococcus jannaschii (strain ATCC 43067 / DSM 2661 / JAL-1 / JCM 10045 / NBRC 100440) (Methanococcus jannaschii).